A 225-amino-acid chain; its full sequence is UPF0758 protein BAMEG_4721 (225 aa).

Residues 103-225 (SIRSPEDCAT…FVSLKEKGHI (123 aa)) form the MPN domain. The Zn(2+) site is built by His-174, His-176, and Asp-187. The JAMM motif motif lies at 174–187 (HNHPSGDPAPSRED).

It belongs to the UPF0758 family.

The polypeptide is UPF0758 protein BAMEG_4721 (Bacillus anthracis (strain CDC 684 / NRRL 3495)).